Here is a 223-residue protein sequence, read N- to C-terminus: Ribose-5-phosphate isomerase A (223 aa).

Substrate contacts are provided by residues 26-29 (TGST), 82-85 (DGAD), and 95-98 (KGGG). Catalysis depends on Glu104, which acts as the Proton acceptor. Lys122 is a binding site for substrate.

This sequence belongs to the ribose 5-phosphate isomerase family. Homodimer.

It carries out the reaction aldehydo-D-ribose 5-phosphate = D-ribulose 5-phosphate. It functions in the pathway carbohydrate degradation; pentose phosphate pathway; D-ribose 5-phosphate from D-ribulose 5-phosphate (non-oxidative stage): step 1/1. Functionally, catalyzes the reversible conversion of ribose-5-phosphate to ribulose 5-phosphate. This chain is Ribose-5-phosphate isomerase A, found in Streptococcus agalactiae serotype III (strain NEM316).